Here is an 80-residue protein sequence, read N- to C-terminus: Raniseptin-1 (80 aa).

Residues 1 to 22 (MAFLKKSLFLVLFLGIVSLSIC) form the signal peptide. Residues 23–49 (EEEKREGEEEEKQEEENEELSEEELRE) constitute a propeptide that is removed on maturation.

This sequence belongs to the frog skin active peptide (FSAP) family. Dermaseptin subfamily. In terms of tissue distribution, expressed by the skin glands.

The protein localises to the secreted. Has antibacterial activity against the Gram-negative bacteria E.coli ATCC 25922 (MIC=5 uM), P.aeruginosa ATCC 27853 (MIC=10 uM) and X.citri (MIC&lt; 2 uM), and the Gram-positive bacterium S.aureus ATCC 29313 (MIC=20 uM). Does not have hemolytic activity against human erythrocytes. The polypeptide is Raniseptin-1 (Boana raniceps (Chaco tree frog)).